Reading from the N-terminus, the 40-residue chain is Photosystem II reaction center protein J (40 aa).

Residues 8–28 traverse the membrane as a helical segment; sequence IPLWLVGTVTGIPVIGLIGVF.

Belongs to the PsbJ family. PSII is composed of 1 copy each of membrane proteins PsbA, PsbB, PsbC, PsbD, PsbE, PsbF, PsbH, PsbI, PsbJ, PsbK, PsbL, PsbM, PsbT, PsbX, PsbY, PsbZ, Psb30/Ycf12, at least 3 peripheral proteins of the oxygen-evolving complex and a large number of cofactors. It forms dimeric complexes.

The protein resides in the plastid. It localises to the chloroplast thylakoid membrane. One of the components of the core complex of photosystem II (PSII). PSII is a light-driven water:plastoquinone oxidoreductase that uses light energy to abstract electrons from H(2)O, generating O(2) and a proton gradient subsequently used for ATP formation. It consists of a core antenna complex that captures photons, and an electron transfer chain that converts photonic excitation into a charge separation. In Musa acuminata (Banana), this protein is Photosystem II reaction center protein J.